Reading from the N-terminus, the 81-residue chain is MSHKIKIYDTCIGCTQCVRACPTDVLEMIPWQGCKAKQIASAPRTEDCVGCKRCESACPTDFLSVRVYLGSETTRSMGLAY.

4Fe-4S ferredoxin-type domains are found at residues 2 to 31 and 39 to 68; these read SHKI…MIPW and IASA…VRVY. Positions 11, 14, 17, 21, 48, 51, 54, and 58 each coordinate [4Fe-4S] cluster.

In terms of assembly, the eukaryotic PSI reaction center is composed of at least 11 subunits. Requires [4Fe-4S] cluster as cofactor.

Its subcellular location is the plastid. The protein resides in the chloroplast thylakoid membrane. It catalyses the reaction reduced [plastocyanin] + hnu + oxidized [2Fe-2S]-[ferredoxin] = oxidized [plastocyanin] + reduced [2Fe-2S]-[ferredoxin]. Its function is as follows. Apoprotein for the two 4Fe-4S centers FA and FB of photosystem I (PSI); essential for photochemical activity. FB is the terminal electron acceptor of PSI, donating electrons to ferredoxin. The C-terminus interacts with PsaA/B/D and helps assemble the protein into the PSI complex. Required for binding of PsaD and PsaE to PSI. PSI is a plastocyanin-ferredoxin oxidoreductase, converting photonic excitation into a charge separation, which transfers an electron from the donor P700 chlorophyll pair to the spectroscopically characterized acceptors A0, A1, FX, FA and FB in turn. This chain is Photosystem I iron-sulfur center, found in Chara vulgaris (Common stonewort).